The primary structure comprises 478 residues: NAD-dependent malic enzyme (478 aa).

Residues 12–86 (TIRLQFEKDI…GVKIVNVSDR (75 aa)) form the ACT domain. Tyr-114 serves as the catalytic Proton donor. Catalysis depends on Lys-169, which acts as the Proton acceptor. A divalent metal cation contacts are provided by Glu-211, Asp-212, and Asp-237. NAD(+) contacts are provided by residues 270–273 (IGAA), Asn-363, and Asn-393.

This sequence belongs to the malic enzymes family. As to quaternary structure, homotetramer. Mg(2+) is required as a cofactor. Mn(2+) serves as cofactor.

The enzyme catalyses (S)-malate + NAD(+) = pyruvate + CO2 + NADH. It carries out the reaction oxaloacetate + H(+) = pyruvate + CO2. The activity is enhanced 5-7 times by ammonium and potassium. Its function is as follows. In addition to the NAD-dependent oxidative decarboxylation of L-malate, the enzyme catalyzes the decarboxylation of oxaloacetate. This chain is NAD-dependent malic enzyme, found in Geobacillus stearothermophilus (Bacillus stearothermophilus).